The primary structure comprises 754 residues: Elongation factor G-2, mitochondrial (754 aa).

In terms of domain architecture, tr-type G spans 63–340; sequence DKLRNIGISA…GVVSFLPSPN (278 aa). GTP contacts are provided by residues 72–79, 139–143, and 193–196; these read AHIDSGKT, DTPGH, and NKLD.

This sequence belongs to the TRAFAC class translation factor GTPase superfamily. Classic translation factor GTPase family. EF-G/EF-2 subfamily. Expressed in cotyledons and adult leaves at the same levels.

Its subcellular location is the mitochondrion. Its pathway is protein biosynthesis; polypeptide chain elongation. Its function is as follows. Mitochondrial GTPase that catalyzes the GTP-dependent ribosomal translocation step during translation elongation. During this step, the ribosome changes from the pre-translocational (PRE) to the post-translocational (POST) state as the newly formed A-site-bound peptidyl-tRNA and P-site-bound deacylated tRNA move to the P and E sites, respectively. Catalyzes the coordinated movement of the two tRNA molecules, the mRNA and conformational changes in the ribosome. This is Elongation factor G-2, mitochondrial (MEFG2) from Arabidopsis thaliana (Mouse-ear cress).